We begin with the raw amino-acid sequence, 374 residues long: Speckle-type POZ protein (374 aa).

One can recognise an MATH domain in the interval 31–161 (KFSYMWTINN…DDKLTLFCEV (131 aa)). A required for nuclear localization region spans residues 71–191 (VNPKGLDEES…PDCRLADELG (121 aa)). Positions 173-297 (QNTMNMVKVP…MCEDALCTSL (125 aa)) constitute a BTB domain. Residues 297–355 (LSVENAAEILILADLHSADQLKTQAVDFINYHASDVMETSGWKSMVASHPHLVAEAYRS) are homodimerization.

This sequence belongs to the Tdpoz family. As to quaternary structure, homodimer. Part of cullin-RING-based BCR (BTB-CUL3-RBX1) E3 ubiquitin-protein ligase complexes that contain CUL3 and SPOP, plus a target protein.

The protein resides in the nucleus. It is found in the nucleus speckle. It participates in protein modification; protein ubiquitination. Component of a cullin-RING-based BCR (BTB-CUL3-RBX1) E3 ubiquitin-protein ligase complex that mediates the ubiquitination of target proteins, leading most often to their proteasomal degradation. The protein is Speckle-type POZ protein (spop) of Danio rerio (Zebrafish).